We begin with the raw amino-acid sequence, 159 residues long: MEVSMRKPYFIEEEDDGFVSLSEMEAGVSSPSCYNYPQSYYYNHHHHQYSVSSPRSGKFHDFRFDNSYYGYGQPHFLDSCFLCKKRLGDNRDIFMYRGDTPFCSEECREEQIERDEAKEKKQSLSTSVKAMRRNEKRSSSSSPTRSRNYAFRTGTVAAA.

The segment at 75–119 (HFLDSCFLCKKRLGDNRDIFMYRGDTPFCSEECREEQIERDEAKE) adopts an FLZ-type zinc-finger fold. Residues 113–122 (ERDEAKEKKQ) show a composition bias toward basic and acidic residues. The segment at 113 to 159 (ERDEAKEKKQSLSTSVKAMRRNEKRSSSSSPTRSRNYAFRTGTVAAA) is disordered.

The protein belongs to the FLZ family. In terms of assembly, interacts with KIN10 and KIN11 via its FLZ-type zinc finger domain. Interacts with KINB1, KINB2, KINB3 and SNF4 via its N-terminal part. Forms heterodimer with FLZ7, FLZ10, FLZ11, FLZ12, FLZ15, FLZ17 and FLZ18 in vitro.

May act as an adapter to facilitate the interaction of SnRK1 complex with effector proteins, conferring tissue- and stimulus-type specific differences in the SnRK1 regulation pathway. In Arabidopsis thaliana (Mouse-ear cress), this protein is FCS-Like Zinc finger 2.